The primary structure comprises 1070 residues: Carbamoyl phosphate synthase large chain (1070 aa).

The tract at residues 1–401 is carboxyphosphate synthetic domain; that stretch reads MPKRDDIKTI…ALLKAVRSLE (401 aa). ATP-binding residues include R129, R169, G175, G176, K208, I210, E215, G241, I242, H243, Q284, and E298. The region spanning 133–327 is the ATP-grasp 1 domain; sequence RDLMNELGEP…IAKLAAKIAV (195 aa). The Mg(2+) site is built by Q284, E298, and N300. Mn(2+) is bound by residues Q284, E298, and N300. Residues 402–546 are oligomerization domain; it reads VGADHLLLEE…YSTYEEENES (145 aa). A carbamoyl phosphate synthetic domain region spans residues 547-929; the sequence is TRSAKESVIV…ALYKGFVASG (383 aa). Positions 671–861 constitute an ATP-grasp 2 domain; that stretch reads EKALEILQIP…MANVATRVIL (191 aa). Residues R707, R746, V748, E752, G777, V778, H779, S780, Q820, and E832 each coordinate ATP. Residues Q820, E832, and N834 each coordinate Mg(2+). Mn(2+) is bound by residues Q820, E832, and N834. The MGS-like domain maps to 930–1070; the sequence is TTMHDYGTVL…SEVKQPKVRV (141 aa). An allosteric domain region spans residues 930–1070; the sequence is TTMHDYGTVL…SEVKQPKVRV (141 aa).

Belongs to the CarB family. In terms of assembly, composed of two chains; the small (or glutamine) chain promotes the hydrolysis of glutamine to ammonia, which is used by the large (or ammonia) chain to synthesize carbamoyl phosphate. Tetramer of heterodimers (alpha,beta)4. Mg(2+) serves as cofactor. It depends on Mn(2+) as a cofactor.

The catalysed reaction is hydrogencarbonate + L-glutamine + 2 ATP + H2O = carbamoyl phosphate + L-glutamate + 2 ADP + phosphate + 2 H(+). The enzyme catalyses hydrogencarbonate + NH4(+) + 2 ATP = carbamoyl phosphate + 2 ADP + phosphate + 2 H(+). The protein operates within amino-acid biosynthesis; L-arginine biosynthesis; carbamoyl phosphate from bicarbonate: step 1/1. Its pathway is pyrimidine metabolism; UMP biosynthesis via de novo pathway; (S)-dihydroorotate from bicarbonate: step 1/3. Functionally, large subunit of the glutamine-dependent carbamoyl phosphate synthetase (CPSase). CPSase catalyzes the formation of carbamoyl phosphate from the ammonia moiety of glutamine, carbonate, and phosphate donated by ATP, constituting the first step of 2 biosynthetic pathways, one leading to arginine and/or urea and the other to pyrimidine nucleotides. The large subunit (synthetase) binds the substrates ammonia (free or transferred from glutamine from the small subunit), hydrogencarbonate and ATP and carries out an ATP-coupled ligase reaction, activating hydrogencarbonate by forming carboxy phosphate which reacts with ammonia to form carbamoyl phosphate. This Listeria welshimeri serovar 6b (strain ATCC 35897 / DSM 20650 / CCUG 15529 / CIP 8149 / NCTC 11857 / SLCC 5334 / V8) protein is Carbamoyl phosphate synthase large chain.